The primary structure comprises 314 residues: Olfactory receptor 1E2 (314 aa).

At 1 to 25 (MMGQNQTSISDFLLLGLPIQPEQQN) the chain is on the extracellular side. An N-linked (GlcNAc...) asparagine glycan is attached at Asn-5. A helical membrane pass occupies residues 26–49 (LCYALFLAMYLTTLLGNLLIIVLI). Residues 50 to 57 (RLDSHLHT) lie on the Cytoplasmic side of the membrane. Residues 58 to 79 (PMYLFLSNLSFSDLCFSSVTIP) traverse the membrane as a helical segment. The Extracellular segment spans residues 80–100 (KLLQNMQNQDPSIPYADCLTQ). A disulfide bond links Cys-97 and Cys-189. Residues 101–120 (MYFFLLFGDLESFLLVAMAY) traverse the membrane as a helical segment. The Cytoplasmic portion of the chain corresponds to 121 to 139 (DRYVAICFPLHYTAIMSPM). Residues 140 to 158 (LCLSLVALSWVLTTFHAML) form a helical membrane-spanning segment. Residues 159 to 195 (HTLLMARLCFCADNVIPHFFCDMSALLKLACSDTRVN) lie on the Extracellular side of the membrane. Residues 196 to 219 (EWVIFIMGGLIVVIPFLLILGSYA) form a helical membrane-spanning segment. Residues 220–236 (RIVSSILKVPSSKGICK) lie on the Cytoplasmic side of the membrane. A helical transmembrane segment spans residues 237-259 (AFSTCGSHLSVVSLFYGTIIGLY). At 260 to 272 (LCPSANSSTLKET) the chain is on the extracellular side. N-linked (GlcNAc...) asparagine glycosylation is present at Asn-265. The helical transmembrane segment at 273–292 (VMAMMYTVVTPMLNPFIYSL) threads the bilayer. The Cytoplasmic segment spans residues 293–314 (RNRDMKGALERVICKRKNPFLL).

It belongs to the G-protein coupled receptor 1 family.

It localises to the cell membrane. Its function is as follows. Odorant receptor. This is Olfactory receptor 1E2 (OR1E2) from Gorilla gorilla gorilla (Western lowland gorilla).